Here is a 319-residue protein sequence, read N- to C-terminus: tRNA uridine(34) hydroxylase (319 aa).

Residues 125-219 enclose the Rhodanese domain; sequence LDENTVVIDA…YGKDPEVQGD (95 aa). Catalysis depends on Cys-179, which acts as the Cysteine persulfide intermediate.

Belongs to the TrhO family.

The enzyme catalyses uridine(34) in tRNA + AH2 + O2 = 5-hydroxyuridine(34) in tRNA + A + H2O. In terms of biological role, catalyzes oxygen-dependent 5-hydroxyuridine (ho5U) modification at position 34 in tRNAs. The protein is tRNA uridine(34) hydroxylase of Lactococcus lactis subsp. cremoris (strain MG1363).